The primary structure comprises 211 residues: Thiamine-phosphate synthase (211 aa).

4-amino-2-methyl-5-(diphosphooxymethyl)pyrimidine contacts are provided by residues 36–40 and Asn-68; that span reads QLRDK. 2 residues coordinate Mg(2+): Asp-69 and Asp-88. Ser-107 contacts 4-amino-2-methyl-5-(diphosphooxymethyl)pyrimidine. Residue 133–135 participates in 2-[(2R,5Z)-2-carboxy-4-methylthiazol-5(2H)-ylidene]ethyl phosphate binding; the sequence is TKS. Lys-136 contacts 4-amino-2-methyl-5-(diphosphooxymethyl)pyrimidine. Residues Gly-164 and 184 to 185 contribute to the 2-[(2R,5Z)-2-carboxy-4-methylthiazol-5(2H)-ylidene]ethyl phosphate site; that span reads IS.

It belongs to the thiamine-phosphate synthase family. Mg(2+) is required as a cofactor.

The enzyme catalyses 2-[(2R,5Z)-2-carboxy-4-methylthiazol-5(2H)-ylidene]ethyl phosphate + 4-amino-2-methyl-5-(diphosphooxymethyl)pyrimidine + 2 H(+) = thiamine phosphate + CO2 + diphosphate. The catalysed reaction is 2-(2-carboxy-4-methylthiazol-5-yl)ethyl phosphate + 4-amino-2-methyl-5-(diphosphooxymethyl)pyrimidine + 2 H(+) = thiamine phosphate + CO2 + diphosphate. It carries out the reaction 4-methyl-5-(2-phosphooxyethyl)-thiazole + 4-amino-2-methyl-5-(diphosphooxymethyl)pyrimidine + H(+) = thiamine phosphate + diphosphate. It functions in the pathway cofactor biosynthesis; thiamine diphosphate biosynthesis; thiamine phosphate from 4-amino-2-methyl-5-diphosphomethylpyrimidine and 4-methyl-5-(2-phosphoethyl)-thiazole: step 1/1. Its function is as follows. Condenses 4-methyl-5-(beta-hydroxyethyl)thiazole monophosphate (THZ-P) and 2-methyl-4-amino-5-hydroxymethyl pyrimidine pyrophosphate (HMP-PP) to form thiamine monophosphate (TMP). The protein is Thiamine-phosphate synthase of Halalkalibacterium halodurans (strain ATCC BAA-125 / DSM 18197 / FERM 7344 / JCM 9153 / C-125) (Bacillus halodurans).